Here is a 411-residue protein sequence, read N- to C-terminus: Secretion apparatus protein BsaZ (411 aa).

Helical transmembrane passes span 28-48 (IVAL…VDLT), 80-100 (IAAP…LVQS), 137-157 (ALLY…LYHA), and 175-195 (IVLT…VLIL). A disordered region spans residues 341–411 (AANRGGPPPE…APARTGDQNA (71 aa)). The span at 370–404 (DACADNAFPDDAPPGAAAPNAGSPDGPAPDGGAPA) shows a compositional bias: low complexity.

This sequence belongs to the type III secretion exporter family.

It is found in the cell membrane. In terms of biological role, part of the bsa type III secretion system, is involved in the intracellular replication of invading bacteria inside the host cell. Probably necessary for the lysis of the vacuole membrane and escape into the host cell cytoplasm. This chain is Secretion apparatus protein BsaZ (bsaZ), found in Burkholderia pseudomallei (strain 1710b).